A 116-amino-acid chain; its full sequence is Large ribosomal subunit protein bL20 (116 aa).

The protein belongs to the bacterial ribosomal protein bL20 family.

Binds directly to 23S ribosomal RNA and is necessary for the in vitro assembly process of the 50S ribosomal subunit. It is not involved in the protein synthesizing functions of that subunit. This Hydrogenobaculum sp. (strain Y04AAS1) protein is Large ribosomal subunit protein bL20.